The chain runs to 405 residues: L-rhamnonate dehydratase (405 aa).

Substrate is bound by residues H33 and R59. D226, E252, and E280 together coordinate Mg(2+). The active-site Proton acceptor is the H329. Residue E349 participates in substrate binding.

This sequence belongs to the mandelate racemase/muconate lactonizing enzyme family. RhamD subfamily. As to quaternary structure, homooctamer; tetramer of dimers. The cofactor is Mg(2+).

It carries out the reaction L-rhamnonate = 2-dehydro-3-deoxy-L-rhamnonate + H2O. In terms of biological role, catalyzes the dehydration of L-rhamnonate to 2-keto-3-deoxy-L-rhamnonate (KDR). Can also dehydrate L-lyxonate and L-mannonate, although less efficiently, but not 2-keto-4-hydroxyheptane-1,7-dioate. The sequence is that of L-rhamnonate dehydratase (rhmD) from Salmonella typhimurium (strain LT2 / SGSC1412 / ATCC 700720).